A 51-amino-acid chain; its full sequence is Light-harvesting protein B800/850/890 beta-2 chain (51 aa).

The Cytoplasmic portion of the chain corresponds to 1–17 (ADEMRNVSDEEAKEFHA). Positions 16 and 34 each coordinate a bacteriochlorophyll. Residues 18–40 (MFSQAFTVYVGVAVVAHILAWAW) traverse the membrane as a helical segment. Over 41-51 (RPWIPGDEGFG) the chain is Periplasmic.

It belongs to the antenna complex beta subunit family. In terms of assembly, the core complex is formed by different alpha and beta chains, binding bacteriochlorophyll molecules, and arranged most probably in tetrameric structures disposed around the reaction center. The non-pigmented gamma chains may constitute additional components.

The protein resides in the cell inner membrane. In terms of biological role, antenna complexes are light-harvesting systems, which transfer the excitation energy to the reaction centers. In Halorhodospira halophila (strain DSM 244 / SL1) (Ectothiorhodospira halophila (strain DSM 244 / SL1)), this protein is Light-harvesting protein B800/850/890 beta-2 chain.